Consider the following 292-residue polypeptide: Cytochrome c1, heme protein, mitochondrial (292 aa).

A mitochondrion-targeting transit peptide spans methionine 1–alanine 46. The Mitochondrial intermembrane portion of the chain corresponds to methionine 47–arginine 253. The Cytochrome c domain occupies serine 73 to proline 226. Heme c contacts are provided by cysteine 86, cysteine 89, and histidine 90. A disordered region spans residues phenylalanine 117–alanine 137. Methionine 210 contributes to the heme c binding site. Residues leucine 254 to valine 272 form a helical membrane-spanning segment. Topologically, residues lysine 273–lysine 292 are mitochondrial matrix.

The protein belongs to the cytochrome c family. As to quaternary structure, component of the ubiquinol-cytochrome c oxidoreductase (cytochrome b-c1 complex, complex III, CIII), a multisubunit enzyme composed of 3 respiratory subunits cytochrome b, cytochrome c1 and Rieske protein, 2 core protein subunits, and additional low-molecular weight protein subunits. The complex exists as an obligatory dimer and forms supercomplexes (SCs) in the inner mitochondrial membrane with cytochrome c oxidase (complex IV, CIV). Requires heme c as cofactor.

The protein localises to the mitochondrion inner membrane. It carries out the reaction a quinol + 2 Fe(III)-[cytochrome c](out) = a quinone + 2 Fe(II)-[cytochrome c](out) + 2 H(+)(out). Its function is as follows. Component of the ubiquinol-cytochrome c oxidoreductase, a multisubunit transmembrane complex that is part of the mitochondrial electron transport chain which drives oxidative phosphorylation. The respiratory chain contains 3 multisubunit complexes succinate dehydrogenase (complex II, CII), ubiquinol-cytochrome c oxidoreductase (cytochrome b-c1 complex, complex III, CIII) and cytochrome c oxidase (complex IV, CIV), that cooperate to transfer electrons derived from NADH and succinate to molecular oxygen, creating an electrochemical gradient over the inner membrane that drives transmembrane transport and the ATP synthase. The cytochrome b-c1 complex catalyzes electron transfer from ubiquinol to cytochrome c, linking this redox reaction to translocation of protons across the mitochondrial inner membrane, with protons being carried across the membrane as hydrogens on the quinol. In the process called Q cycle, 2 protons are consumed from the matrix, 4 protons are released into the intermembrane space and 2 electrons are passed to cytochrome c. Cytochrome c1 is a catalytic core subunit containing a c-type heme. It transfers electrons from the [2Fe-2S] iron-sulfur cluster of the Rieske protein to cytochrome c. This Kluyveromyces lactis (strain ATCC 8585 / CBS 2359 / DSM 70799 / NBRC 1267 / NRRL Y-1140 / WM37) (Yeast) protein is Cytochrome c1, heme protein, mitochondrial (CYT1).